The primary structure comprises 132 residues: L-ectoine synthase (132 aa).

Belongs to the ectoine synthase family.

The enzyme catalyses (2S)-4-acetamido-2-aminobutanoate = L-ectoine + H2O. It functions in the pathway amine and polyamine biosynthesis; ectoine biosynthesis; L-ectoine from L-aspartate 4-semialdehyde: step 3/3. Its function is as follows. Catalyzes the circularization of gamma-N-acetyl-alpha,gamma-diaminobutyric acid (ADABA) to ectoine (1,4,5,6-tetrahydro-2-methyl-4-pyrimidine carboxylic acid), which is an excellent osmoprotectant. In Rhodococcus opacus (strain B4), this protein is L-ectoine synthase.